A 510-amino-acid polypeptide reads, in one-letter code: NADH-quinone oxidoreductase subunit N (510 aa).

A run of 14 helical transmembrane segments spans residues 14-34 (LLPE…DLFA), 42-62 (VIGW…IINM), 84-104 (AFKL…LSYL), 113-133 (GEYY…ASSA), 135-155 (LITL…LVGL), 170-190 (VVSG…VYGL), 208-228 (MAGY…GLAF), 247-267 (PTPV…ALIF), 286-306 (FFFE…MIIG), 323-343 (SGIA…SLFF), 346-366 (VIFY…VIMV), 390-410 (AIAM…VGFF), 426-446 (WLAA…FGII), and 466-486 (IWTF…FPGL).

The protein belongs to the complex I subunit 2 family. In terms of assembly, NDH-1 is composed of 14 different subunits. Subunits NuoA, H, J, K, L, M, N constitute the membrane sector of the complex.

Its subcellular location is the cell membrane. The catalysed reaction is a quinone + NADH + 5 H(+)(in) = a quinol + NAD(+) + 4 H(+)(out). Its function is as follows. NDH-1 shuttles electrons from NADH, via FMN and iron-sulfur (Fe-S) centers, to quinones in the respiratory chain. The immediate electron acceptor for the enzyme in this species is believed to be a menaquinone. Couples the redox reaction to proton translocation (for every two electrons transferred, four hydrogen ions are translocated across the cytoplasmic membrane), and thus conserves the redox energy in a proton gradient. The sequence is that of NADH-quinone oxidoreductase subunit N from Brevibacillus brevis (strain 47 / JCM 6285 / NBRC 100599).